Here is a 160-residue protein sequence, read N- to C-terminus: MAKQKKQSPGTIALNKKALHDYFIEQKFEAGLVLAGWEVKSLRAGKAQLVDSYVLLKDGEAWLMGAHITPLTSASTHVIADPTRTRKLLLNKRELGKLFGAVQQKGYACVALSLYWKKHMIKCEIALAKGKKEFDKRHTEKERDSDREIQRAMRTKGKDD.

Positions 131–160 (KKEFDKRHTEKERDSDREIQRAMRTKGKDD) are disordered.

It belongs to the SmpB family.

It localises to the cytoplasm. In terms of biological role, required for rescue of stalled ribosomes mediated by trans-translation. Binds to transfer-messenger RNA (tmRNA), required for stable association of tmRNA with ribosomes. tmRNA and SmpB together mimic tRNA shape, replacing the anticodon stem-loop with SmpB. tmRNA is encoded by the ssrA gene; the 2 termini fold to resemble tRNA(Ala) and it encodes a 'tag peptide', a short internal open reading frame. During trans-translation Ala-aminoacylated tmRNA acts like a tRNA, entering the A-site of stalled ribosomes, displacing the stalled mRNA. The ribosome then switches to translate the ORF on the tmRNA; the nascent peptide is terminated with the 'tag peptide' encoded by the tmRNA and targeted for degradation. The ribosome is freed to recommence translation, which seems to be the essential function of trans-translation. In Stutzerimonas stutzeri (strain A1501) (Pseudomonas stutzeri), this protein is SsrA-binding protein.